Consider the following 428-residue polypeptide: Dihydroorotase (428 aa).

Positions 60 and 62 each coordinate Zn(2+). Residues 62–64 (HLR) and N94 contribute to the substrate site. D152, H179, and H232 together coordinate Zn(2+). A substrate-binding site is contributed by N278. D305 provides a ligand contact to Zn(2+). D305 is an active-site residue. Residue H309 participates in substrate binding.

Belongs to the metallo-dependent hydrolases superfamily. DHOase family. Class I DHOase subfamily. Zn(2+) is required as a cofactor.

It catalyses the reaction (S)-dihydroorotate + H2O = N-carbamoyl-L-aspartate + H(+). It participates in pyrimidine metabolism; UMP biosynthesis via de novo pathway; (S)-dihydroorotate from bicarbonate: step 3/3. In terms of biological role, catalyzes the reversible cyclization of carbamoyl aspartate to dihydroorotate. This Ruminiclostridium cellulolyticum (strain ATCC 35319 / DSM 5812 / JCM 6584 / H10) (Clostridium cellulolyticum) protein is Dihydroorotase.